The primary structure comprises 918 residues: MTNYSLRARMMILILAPTVLIGLLLSIFFVVHRYNDLQRQLEDAGASIIEPLAVSTEYGMSLQNRESIGQLISVLHRRHSDIVRAISVYDENNRLFVTSNFHLDPSSMQLGSNVPFPRQLTVTRDGDIMILRTPIISESYSPDESPSSDAKNSQNMLGYIALELDLKSVRLQQYKEIFISCVMMLFCIGIALIFGWRLMRDVTGPIRNMVNTVDRIRRGQLDSRVEGFMLGELDMLKNGINSMAMSLAAYHEEMQHNIDQATSDLRETLEQMEIQNVELDLAKKRAQEAARIKSEFLANMSHELRTPLNGVIGFTRLTLKTELTPTQRDHLNTIERSANNLLAIINDVLDFSKLEAGKLILESIPFPLRSTLDEVVTLLAHSSHDKGLELTLNIKSDVPDNVIGDPLRLQQIITNLVGNAIKFTENGNIDILVEKRALSNTKVQIEVQIRDTGIGIPERDQSRLFQAFRQADASISRRHGGTGLGLVITQKLVNEMGGDISFHSQPNRGSTFWFHINLDLNPNIIIEGPSIQCLAGKRLAYVEPNSAAAQCTLDILSETPLEVVYSPTFSALPPAHYDMMLLGIAVTFREPLTMQHERLAKAVSMTDFLMLALPCHAQVNAEKLKQDGIGACLLKPLTPTRLLPALTEFCHHKQNTLLPVTDESKLAMTVMAVDDNPANLKLIGALLEDMVQHVELCDSGHQAVERAKQMPFDLILMDIQMPDMDGIRACELIHQLPHQRQTPVIAVTAHAMAGQKEKLLGAGMSDYLAKPIEEERLHNLLLRYKPGSGISSRVVTPEVNEIVVNPNATLDWQLALRQAAGKTDLARDMLQMLLDFLPEVRNKVEEQLAGENPEGLVDLIHKLHGSCGYSGVPRMKNLCQLIEQQLRSGTKEEDLEPELLELLDEMDNVAREASKILG.

Topologically, residues 1 to 10 (MTNYSLRARM) are cytoplasmic. A helical membrane pass occupies residues 11-31 (MILILAPTVLIGLLLSIFFVV). Over 32–175 (HRYNDLQRQL…LKSVRLQQYK (144 aa)) the chain is Periplasmic. The chain crosses the membrane as a helical span at residues 176–196 (EIFISCVMMLFCIGIALIFGW). Residues 197 to 918 (RLMRDVTGPI…VAREASKILG (722 aa)) lie on the Cytoplasmic side of the membrane. The HAMP domain occupies 200 to 252 (RDVTGPIRNMVNTVDRIRRGQLDSRVEGFMLGELDMLKNGINSMAMSLAAYHE). Positions 299-520 (NMSHELRTPL…TFWFHINLDL (222 aa)) constitute a Histidine kinase domain. His-302 carries the post-translational modification Phosphohistidine; by autocatalysis. A Response regulatory domain is found at 669–785 (TVMAVDDNPA…RLHNLLLRYK (117 aa)). 4-aspartylphosphate is present on Asp-718. In terms of domain architecture, HPt spans 822-918 (KTDLARDMLQ…VAREASKILG (97 aa)). Position 861 is a phosphohistidine (His-861).

In terms of processing, activation requires a sequential transfer of a phosphate group from a His in the primary transmitter domain, to an Asp in the receiver domain and to a His in the secondary transmitter domain.

It is found in the cell inner membrane. It carries out the reaction ATP + protein L-histidine = ADP + protein N-phospho-L-histidine.. Functionally, member of the two-component regulatory system UvrY/BarA involved in the regulation of carbon metabolism via the CsrA/CsrB regulatory system. Phosphorylates UvrY, probably via a four-step phosphorelay. This Shigella flexneri protein is Signal transduction histidine-protein kinase BarA (barA).